The sequence spans 384 residues: Bacterial ceramide synthase (384 aa).

The protein resides in the cytoplasm. It catalyses the reaction 3-oxosphinganine + a fatty acyl-CoA = N-acyl-3-oxosphinganine + CoA + H(+). The catalysed reaction is 3-oxosphinganine + tetradecanoyl-CoA = N-tetradecanoyl-3-oxosphinganine + CoA + H(+). The enzyme catalyses 3-oxosphinganine + hexadecanoyl-CoA = N-hexadecanoyl-3-oxosphinganine + CoA + H(+). It carries out the reaction 3-oxosphinganine + (9Z)-hexadecenoyl-CoA = N-(9Z-hexadecenoyl)-3-oxosphinganine + CoA + H(+). It catalyses the reaction 3-oxosphinganine + octanoyl-CoA = N-octanoyl-3-oxosphinganine + CoA + H(+). The catalysed reaction is 3-oxosphinganine + decanoyl-CoA = N-decanoyl-3-oxosphinganine + CoA + H(+). The enzyme catalyses 3-oxosphinganine + dodecanoyl-CoA = N-dodecanoyl-3-oxosphinganine + CoA + H(+). It carries out the reaction 3-oxosphinganine + octadecanoyl-CoA = N-octadecanoyl-3-oxosphinganine + CoA + H(+). It catalyses the reaction 3-oxosphinganine + eicosanoyl-CoA = N-eicosanoyl-3-oxosphinganine + CoA + H(+). The catalysed reaction is 3-oxosphinganine + docosanoyl-CoA = N-docosanoyl-3-ketodihydrosphingosine + CoA + H(+). The enzyme catalyses 3-oxosphinganine + tetracosanoyl-CoA = N-tetracosanoyl-3-oxosphinganine + CoA + H(+). It participates in lipid metabolism; sphingolipid metabolism. Involved in de novo bacterial ceramide synthesis. Catalyzes the condensation of 3-oxosphinganine with an acyl-CoA to generate oxidized ceramides. Can use acyl-CoA substrates ranging from C8 to C24, with highest in vitro activity with C14 and very little activity with acyl-CoA thioesters of 18 carbons or longer. May have a preference for monounsaturated acyl-CoA substrates, as it has a threefold greater preference for C16:1-CoA over C16:0-CoA as a substrate in vitro. The chain is Bacterial ceramide synthase from Caulobacter vibrioides (strain NA1000 / CB15N) (Caulobacter crescentus).